The primary structure comprises 476 residues: Adenylyl cyclase-associated protein 2 (476 aa).

A disordered region spans residues 223 to 322; that stretch reads SILSSGPGLP…KSNSPQKHTP (100 aa). The segment covering 230–247 has biased composition (pro residues); that stretch reads GLPPPPPPPPPPGPPPPF. Positions 288–299 are enriched in polar residues; it reads KNPSLRAQGQIR. Residues Ser-300 and Ser-308 each carry the phosphoserine modification. The segment covering 300-317 has biased composition (low complexity); it reads SPTKTHTPSPTSPKSNSP. Residues 317 to 454 form the C-CAP/cofactor C-like domain; that stretch reads PQKHTPVLEL…QDDDYREFPI (138 aa).

This sequence belongs to the CAP family. In terms of tissue distribution, expressed in the heart, skeletal muscle, and brain.

Its subcellular location is the cell membrane. Involved in the regulation of actin polymerization. The chain is Adenylyl cyclase-associated protein 2 (Cap2) from Mus musculus (Mouse).